Here is a 358-residue protein sequence, read N- to C-terminus: Phosphoribosylformylglycinamidine cyclo-ligase (358 aa).

It belongs to the AIR synthase family.

Its subcellular location is the cytoplasm. The enzyme catalyses 2-formamido-N(1)-(5-O-phospho-beta-D-ribosyl)acetamidine + ATP = 5-amino-1-(5-phospho-beta-D-ribosyl)imidazole + ADP + phosphate + H(+). Its pathway is purine metabolism; IMP biosynthesis via de novo pathway; 5-amino-1-(5-phospho-D-ribosyl)imidazole from N(2)-formyl-N(1)-(5-phospho-D-ribosyl)glycinamide: step 2/2. The protein is Phosphoribosylformylglycinamidine cyclo-ligase of Nitrosococcus oceani (strain ATCC 19707 / BCRC 17464 / JCM 30415 / NCIMB 11848 / C-107).